Reading from the N-terminus, the 389-residue chain is Tubulin-like protein CetZ3 (389 aa).

GTP is bound by residues 10–14 (QAGGK), 110–112 (GTG), Glu-142, Asn-169, and Asn-187.

Belongs to the CetZ family.

Its subcellular location is the cytoplasm. In terms of biological role, involved in cell shape control. In Haloferax volcanii (strain ATCC 29605 / DSM 3757 / JCM 8879 / NBRC 14742 / NCIMB 2012 / VKM B-1768 / DS2) (Halobacterium volcanii), this protein is Tubulin-like protein CetZ3.